The primary structure comprises 418 residues: Gamma-glutamyl phosphate reductase (418 aa).

Belongs to the gamma-glutamyl phosphate reductase family.

It is found in the cytoplasm. The enzyme catalyses L-glutamate 5-semialdehyde + phosphate + NADP(+) = L-glutamyl 5-phosphate + NADPH + H(+). It functions in the pathway amino-acid biosynthesis; L-proline biosynthesis; L-glutamate 5-semialdehyde from L-glutamate: step 2/2. Functionally, catalyzes the NADPH-dependent reduction of L-glutamate 5-phosphate into L-glutamate 5-semialdehyde and phosphate. The product spontaneously undergoes cyclization to form 1-pyrroline-5-carboxylate. The polypeptide is Gamma-glutamyl phosphate reductase (Dechloromonas aromatica (strain RCB)).